A 555-amino-acid polypeptide reads, in one-letter code: CTP synthase (555 aa).

The amidoligase domain stretch occupies residues 1 to 265; it reads MTRYIFITGG…GNRVCEKLNI (265 aa). A CTP-binding site is contributed by serine 13. Position 13 (serine 13) interacts with UTP. Residues 14–19 and aspartate 71 contribute to the ATP site; that span reads SLGKGI. Aspartate 71 and glutamate 139 together coordinate Mg(2+). CTP contacts are provided by residues 146–148, 186–191, and lysine 222; these read DIE and KTKPTQ. UTP contacts are provided by residues 186-191 and lysine 222; that span reads KTKPTQ. The region spanning 290 to 541 is the Glutamine amidotransferase type-1 domain; that stretch reads TVAVVGKYVD…IKAGLAAKEA (252 aa). Glycine 351 is a binding site for L-glutamine. Residue cysteine 378 is the Nucleophile; for glutamine hydrolysis of the active site. Residues 379–382, glutamate 402, and arginine 469 contribute to the L-glutamine site; that span reads LGMQ. Residues histidine 514 and glutamate 516 contribute to the active site.

Belongs to the CTP synthase family. Homotetramer.

The enzyme catalyses UTP + L-glutamine + ATP + H2O = CTP + L-glutamate + ADP + phosphate + 2 H(+). The catalysed reaction is L-glutamine + H2O = L-glutamate + NH4(+). It carries out the reaction UTP + NH4(+) + ATP = CTP + ADP + phosphate + 2 H(+). It participates in pyrimidine metabolism; CTP biosynthesis via de novo pathway; CTP from UDP: step 2/2. With respect to regulation, allosterically activated by GTP, when glutamine is the substrate; GTP has no effect on the reaction when ammonia is the substrate. The allosteric effector GTP functions by stabilizing the protein conformation that binds the tetrahedral intermediate(s) formed during glutamine hydrolysis. Inhibited by the product CTP, via allosteric rather than competitive inhibition. In terms of biological role, catalyzes the ATP-dependent amination of UTP to CTP with either L-glutamine or ammonia as the source of nitrogen. Regulates intracellular CTP levels through interactions with the four ribonucleotide triphosphates. This is CTP synthase from Coxiella burnetii (strain CbuK_Q154) (Coxiella burnetii (strain Q154)).